We begin with the raw amino-acid sequence, 134 residues long: Large ribosomal subunit protein eL14z (134 aa).

The protein belongs to the eukaryotic ribosomal protein eL14 family.

The sequence is that of Large ribosomal subunit protein eL14z (RPL14A) from Arabidopsis thaliana (Mouse-ear cress).